A 120-amino-acid polypeptide reads, in one-letter code: Putative non-specific lipid-transfer protein 14 (120 aa).

The signal sequence occupies residues Met-1–Ala-22. Cystine bridges form between Cys-30/Cys-80, Cys-40/Cys-57, Cys-58/Cys-102, and Cys-78/Cys-116.

The protein belongs to the plant LTP family.

Plant non-specific lipid-transfer proteins transfer phospholipids as well as galactolipids across membranes. May play a role in wax or cutin deposition in the cell walls of expanding epidermal cells and certain secretory tissues. The sequence is that of Putative non-specific lipid-transfer protein 14 (LTP14) from Arabidopsis thaliana (Mouse-ear cress).